Consider the following 96-residue polypeptide: Cytochrome b (96 aa).

The next 3 helical transmembrane spans lie at 1–15, 39–60, and 75–95; these read LCXIXQILTGLFLAM, WLIRNMHANGSSFFFICIYLHI, and WNVGVILLLLVMMTAFVGYVL. The heme b site is built by H45 and H59.

This sequence belongs to the cytochrome b family. In terms of assembly, the cytochrome bc1 complex contains 3 respiratory subunits (MT-CYB, CYC1 and UQCRFS1), 2 core proteins (UQCRC1 and UQCRC2) and probably 6 low-molecular weight proteins. The cofactor is heme b.

It is found in the mitochondrion inner membrane. Component of the ubiquinol-cytochrome c reductase complex (complex III or cytochrome b-c1 complex) that is part of the mitochondrial respiratory chain. The b-c1 complex mediates electron transfer from ubiquinol to cytochrome c. Contributes to the generation of a proton gradient across the mitochondrial membrane that is then used for ATP synthesis. The polypeptide is Cytochrome b (mt-cyb) (Geophagus steindachneri (Red hump earth eater)).